Consider the following 377-residue polypeptide: Homoserine O-acetyltransferase (377 aa).

In terms of domain architecture, AB hydrolase-1 spans 48-347 (NVVLIEHALT…PVGHDAFLTE (300 aa)). Residue Ser-143 is the Nucleophile of the active site. Residue Arg-213 coordinates substrate. Active-site residues include Asp-311 and His-341. Asp-342 lines the substrate pocket.

This sequence belongs to the AB hydrolase superfamily. MetX family. As to quaternary structure, homodimer.

Its subcellular location is the cytoplasm. The catalysed reaction is L-homoserine + acetyl-CoA = O-acetyl-L-homoserine + CoA. Its pathway is amino-acid biosynthesis; L-methionine biosynthesis via de novo pathway; O-acetyl-L-homoserine from L-homoserine: step 1/1. Transfers an acetyl group from acetyl-CoA to L-homoserine, forming acetyl-L-homoserine. The polypeptide is Homoserine O-acetyltransferase (Corynebacterium efficiens (strain DSM 44549 / YS-314 / AJ 12310 / JCM 11189 / NBRC 100395)).